Reading from the N-terminus, the 179-residue chain is Inner membrane-spanning protein YciB (179 aa).

The next 5 membrane-spanning stretches (helical) occupy residues 22-42 (IYAA…YSWV), 50-70 (MALI…FFHN), 76-96 (WKVT…QWVM), 121-141 (LAWA…AFWL), and 149-169 (FKVF…GVYI).

The protein belongs to the YciB family.

The protein localises to the cell inner membrane. Its function is as follows. Plays a role in cell envelope biogenesis, maintenance of cell envelope integrity and membrane homeostasis. The protein is Inner membrane-spanning protein YciB of Salmonella dublin (strain CT_02021853).